Consider the following 243-residue polypeptide: tRNA pseudouridine synthase A (243 aa).

The active-site Nucleophile is Asp53. Tyr111 provides a ligand contact to substrate.

It belongs to the tRNA pseudouridine synthase TruA family. Homodimer.

The enzyme catalyses uridine(38/39/40) in tRNA = pseudouridine(38/39/40) in tRNA. Formation of pseudouridine at positions 38, 39 and 40 in the anticodon stem and loop of transfer RNAs. This is tRNA pseudouridine synthase A from Chlorobium chlorochromatii (strain CaD3).